A 485-amino-acid chain; its full sequence is UDP-N-acetylmuramoyl-L-alanyl-D-glutamate--2,6-diaminopimelate ligase (485 aa).

UDP-N-acetyl-alpha-D-muramoyl-L-alanyl-D-glutamate is bound at residue Ser30. Position 111 to 117 (111 to 117 (GTNGKTT)) interacts with ATP. UDP-N-acetyl-alpha-D-muramoyl-L-alanyl-D-glutamate is bound by residues 153–154 (TT), Ser180, Gln186, and Arg188. Residue Lys220 is modified to N6-carboxylysine. Meso-2,6-diaminopimelate-binding positions include Arg378, 402–405 (DNPR), Gly455, and Glu459. The Meso-diaminopimelate recognition motif motif lies at 402 to 405 (DNPR).

This sequence belongs to the MurCDEF family. MurE subfamily. Requires Mg(2+) as cofactor. Post-translationally, carboxylation is probably crucial for Mg(2+) binding and, consequently, for the gamma-phosphate positioning of ATP.

It is found in the cytoplasm. It catalyses the reaction UDP-N-acetyl-alpha-D-muramoyl-L-alanyl-D-glutamate + meso-2,6-diaminopimelate + ATP = UDP-N-acetyl-alpha-D-muramoyl-L-alanyl-gamma-D-glutamyl-meso-2,6-diaminopimelate + ADP + phosphate + H(+). Its pathway is cell wall biogenesis; peptidoglycan biosynthesis. Catalyzes the addition of meso-diaminopimelic acid to the nucleotide precursor UDP-N-acetylmuramoyl-L-alanyl-D-glutamate (UMAG) in the biosynthesis of bacterial cell-wall peptidoglycan. This Bacteroides fragilis (strain ATCC 25285 / DSM 2151 / CCUG 4856 / JCM 11019 / LMG 10263 / NCTC 9343 / Onslow / VPI 2553 / EN-2) protein is UDP-N-acetylmuramoyl-L-alanyl-D-glutamate--2,6-diaminopimelate ligase.